The following is a 396-amino-acid chain: MAKSKFERTKPHVNVGTIGHVDHGKTTLTAAITTILSSKFGGEAKAYDQIDAAPEEKARGITINTAHVEYETANRHYAHVDCPGHADYVKNMITGAAQMDGAILVCSAADGPMPQTREHILLARQVGVPYIIVFLNKCDMVDDAELLELVEMEVRELLDKYEFPGDATPIVHGSAKLALEGDKGELGEQAIMKLAEALDSYIPTPERAVDGAFLMPVEDVFSISGRGTVVTGRVERGIIKVGEEIEIVGISATQKTTCTGVEMFRKLLDQGQAGDNVGILLRGTKREDVQRGQVLCKPGSVKPHTHFTAEIYVLSKEEGGRHTPFFNNYRPQFYFRTTDVTGAVELPKDKEMVMPGDNVSITVKLINPIAMEEGLRFAIREGGRTVGAGVVAKIIE.

The 197-residue stretch at 10–206 (KPHVNVGTIG…ALDSYIPTPE (197 aa)) folds into the tr-type G domain. Positions 19–26 (GHVDHGKT) are G1. 19–26 (GHVDHGKT) is a GTP binding site. Mg(2+) is bound at residue Thr26. Residues 60 to 64 (GITIN) are G2. The interval 81–84 (DCPG) is G3. Residues 81–85 (DCPGH) and 136–139 (NKCD) contribute to the GTP site. The segment at 136–139 (NKCD) is G4. Positions 174 to 176 (SAK) are G5.

This sequence belongs to the TRAFAC class translation factor GTPase superfamily. Classic translation factor GTPase family. EF-Tu/EF-1A subfamily. Monomer.

The protein localises to the cytoplasm. It carries out the reaction GTP + H2O = GDP + phosphate + H(+). In terms of biological role, GTP hydrolase that promotes the GTP-dependent binding of aminoacyl-tRNA to the A-site of ribosomes during protein biosynthesis. This chain is Elongation factor Tu, found in Methylibium petroleiphilum (strain ATCC BAA-1232 / LMG 22953 / PM1).